A 171-amino-acid chain; its full sequence is Putative pre-16S rRNA nuclease (171 aa).

Belongs to the YqgF nuclease family.

The protein localises to the cytoplasm. In terms of biological role, could be a nuclease involved in processing of the 5'-end of pre-16S rRNA. This Corynebacterium diphtheriae (strain ATCC 700971 / NCTC 13129 / Biotype gravis) protein is Putative pre-16S rRNA nuclease.